The chain runs to 354 residues: Uroporphyrinogen decarboxylase (354 aa).

Substrate is bound by residues R27–R31, D77, Y154, S209, and H327.

Belongs to the uroporphyrinogen decarboxylase family. Homodimer.

It localises to the cytoplasm. The catalysed reaction is uroporphyrinogen III + 4 H(+) = coproporphyrinogen III + 4 CO2. Its pathway is porphyrin-containing compound metabolism; protoporphyrin-IX biosynthesis; coproporphyrinogen-III from 5-aminolevulinate: step 4/4. Catalyzes the decarboxylation of four acetate groups of uroporphyrinogen-III to yield coproporphyrinogen-III. The polypeptide is Uroporphyrinogen decarboxylase (Shewanella baltica (strain OS185)).